A 350-amino-acid chain; its full sequence is uncharacterized protein (350 aa).

One can recognise an OBG-type G domain in the interval Pro-171–Ile-334. GTP is bound by residues Gly-177–Ser-184, Asp-219–Leu-223, and Asn-286–Asp-289.

The protein belongs to the TRAFAC class OBG-HflX-like GTPase superfamily. OBG GTPase family. NOG subfamily.

This is an uncharacterized protein from Methanocaldococcus jannaschii (strain ATCC 43067 / DSM 2661 / JAL-1 / JCM 10045 / NBRC 100440) (Methanococcus jannaschii).